The chain runs to 283 residues: 32 kDa beta-galactoside-binding lectin (283 aa).

Galectin domains follow at residues 17–148 (YRSL…VHWG) and 156–283 (YESG…IQIQ). 217–223 (WGNEERE) provides a ligand contact to a beta-D-galactoside.

(Microbial infection) Interacts (via domain galectin 2) with goat TMEM147. Interacts (via domain galectin 1) with goat TMEM63A.

It is found in the membrane. Its function is as follows. Binds galactose. Exerts immunomodulatory effects on host peripheral blood mononuclear cells to down-regulate host immune response. Hemagglutinates human, dog, rabbit, chicken and mouse erythrocytes but does not hemagglutinate the erythrocytes of goat, its natural host. The protein is 32 kDa beta-galactoside-binding lectin (GAL-1) of Haemonchus contortus (Barber pole worm).